A 110-amino-acid chain; its full sequence is UPF0060 membrane protein Noc_2955 (110 aa).

The next 4 helical transmembrane spans lie at 7 to 27, 33 to 53, 63 to 83, and 87 to 107; these read VGLFLITALAEIAGCYLAYLW, TIWLLVPCALSLVAFVWLLSL, AAYGGVYIVMAILWLWVVNGI, and TWDLVGSAIALLGMAIIMFAP.

The protein belongs to the UPF0060 family.

It localises to the cell inner membrane. This chain is UPF0060 membrane protein Noc_2955, found in Nitrosococcus oceani (strain ATCC 19707 / BCRC 17464 / JCM 30415 / NCIMB 11848 / C-107).